The following is a 472-amino-acid chain: ATP-dependent rRNA helicase rrp3 (472 aa).

The disordered stretch occupies residues M1–P51. Residues A10–D19 show a composition bias toward basic and acidic residues. Over residues A20–V29 the composition is skewed to polar residues. The Q motif signature appears at K52–A80. The 172-residue stretch at I83–V254 folds into the Helicase ATP-binding domain. Residue A96–T103 coordinates ATP. Positions D202–D205 match the DEAD box motif. The Helicase C-terminal domain maps to Y282–M426. Positions G451 to G472 are disordered. Residues T452–R462 are compositionally biased toward basic residues.

This sequence belongs to the DEAD box helicase family. DDX47/RRP3 subfamily. In terms of assembly, interacts with the SSU processome.

The protein resides in the nucleus. It carries out the reaction ATP + H2O = ADP + phosphate + H(+). Its function is as follows. ATP-dependent rRNA helicase required for pre-ribosomal RNA processing. Involved in the maturation of the 35S-pre-rRNA and to its cleavage to mature 18S rRNA. The chain is ATP-dependent rRNA helicase rrp3 from Neosartorya fischeri (strain ATCC 1020 / DSM 3700 / CBS 544.65 / FGSC A1164 / JCM 1740 / NRRL 181 / WB 181) (Aspergillus fischerianus).